We begin with the raw amino-acid sequence, 362 residues long: Phosphoserine aminotransferase (362 aa).

Residues S9 and R42 each coordinate L-glutamate. Residues 76–77, W102, T153, D174, and Q197 each bind pyridoxal 5'-phosphate; that span reads GR. N6-(pyridoxal phosphate)lysine is present on K198. 239 to 240 contacts pyridoxal 5'-phosphate; it reads NT.

Belongs to the class-V pyridoxal-phosphate-dependent aminotransferase family. SerC subfamily. In terms of assembly, homodimer. Pyridoxal 5'-phosphate serves as cofactor.

The protein resides in the cytoplasm. The enzyme catalyses O-phospho-L-serine + 2-oxoglutarate = 3-phosphooxypyruvate + L-glutamate. It carries out the reaction 4-(phosphooxy)-L-threonine + 2-oxoglutarate = (R)-3-hydroxy-2-oxo-4-phosphooxybutanoate + L-glutamate. It participates in amino-acid biosynthesis; L-serine biosynthesis; L-serine from 3-phospho-D-glycerate: step 2/3. It functions in the pathway cofactor biosynthesis; pyridoxine 5'-phosphate biosynthesis; pyridoxine 5'-phosphate from D-erythrose 4-phosphate: step 3/5. Its function is as follows. Catalyzes the reversible conversion of 3-phosphohydroxypyruvate to phosphoserine and of 3-hydroxy-2-oxo-4-phosphonooxybutanoate to phosphohydroxythreonine. This is Phosphoserine aminotransferase from Escherichia coli (strain ATCC 8739 / DSM 1576 / NBRC 3972 / NCIMB 8545 / WDCM 00012 / Crooks).